The chain runs to 216 residues: Uridine kinase (216 aa).

Residue 16–23 (GASASGKS) participates in ATP binding.

The protein belongs to the uridine kinase family.

It localises to the cytoplasm. The enzyme catalyses uridine + ATP = UMP + ADP + H(+). It carries out the reaction cytidine + ATP = CMP + ADP + H(+). It functions in the pathway pyrimidine metabolism; CTP biosynthesis via salvage pathway; CTP from cytidine: step 1/3. The protein operates within pyrimidine metabolism; UMP biosynthesis via salvage pathway; UMP from uridine: step 1/1. The polypeptide is Uridine kinase (Mannheimia succiniciproducens (strain KCTC 0769BP / MBEL55E)).